A 503-amino-acid chain; its full sequence is 2-isopropylmalate synthase (503 aa).

The region spanning 4–264 (LYIFDTTLRD…EVSIKTEEIY (261 aa)) is the Pyruvate carboxyltransferase domain. Residues D13, H201, H203, and N237 each contribute to the Mn(2+) site. The interval 388–503 (KLRHLQVVSG…NQLVMLKGKD (116 aa)) is regulatory domain.

It belongs to the alpha-IPM synthase/homocitrate synthase family. LeuA type 1 subfamily. In terms of assembly, homodimer. The cofactor is Mn(2+).

The protein resides in the cytoplasm. It catalyses the reaction 3-methyl-2-oxobutanoate + acetyl-CoA + H2O = (2S)-2-isopropylmalate + CoA + H(+). It functions in the pathway amino-acid biosynthesis; L-leucine biosynthesis; L-leucine from 3-methyl-2-oxobutanoate: step 1/4. In terms of biological role, catalyzes the condensation of the acetyl group of acetyl-CoA with 3-methyl-2-oxobutanoate (2-ketoisovalerate) to form 3-carboxy-3-hydroxy-4-methylpentanoate (2-isopropylmalate). This chain is 2-isopropylmalate synthase, found in Dictyoglomus turgidum (strain DSM 6724 / Z-1310).